We begin with the raw amino-acid sequence, 936 residues long: Intimin (936 aa).

The first 41 residues, 1–41 (MIIHGFCTGTRHKHKLRKTFIMLGAGLGLFFSVNQNSFANG), serve as a signal peptide directing secretion. The LysM domain maps to 63-112 (LFYTLKTGESVAQLSKSQGISVPVIWSLNKHLYSSESEMMKASPGQQIIL). Big-1 domains are found at residues 557 to 650 (ITNF…VIFV) and 657 to 748 (ITEI…VEFF). In terms of domain architecture, BIG2 spans 780–831 (KLQATGGNGKYTWKSSNTKIASVDNSGVITLNEKGSATITVVSGDNQSATYT). An intrachain disulfide couples Cys-857 to Cys-934.

Belongs to the intimin/invasin family.

Its subcellular location is the cell outer membrane. Functionally, an inverse autotransporter. This Citrobacter freundii protein is Intimin (eae).